Consider the following 46-residue polypeptide: Esculentin-1 (46 aa).

Residues C40 and C46 are joined by a disulfide bond.

Belongs to the frog skin active peptide (FSAP) family. Brevinin subfamily. As to expression, expressed by the skin glands.

The protein localises to the secreted. Shows antibacterial activity against representative Gram-negative and Gram-positive bacterial species, and hemolytic activity. This Pelophylax lessonae (Pool frog) protein is Esculentin-1.